Reading from the N-terminus, the 533-residue chain is Metallothionein expression activator (533 aa).

2 consecutive C2H2-type zinc fingers follow at residues 443–472 (YVCL…SDRP) and 473–500 (YRCD…NGRP). A C2H2-type 3; atypical zinc finger spans residues 501–524 (YVCECLKRFNRLDALNRHKQRNIC).

Its subcellular location is the nucleus. Functionally, regulates the transcription of genes required for cell separation. This chain is Metallothionein expression activator (ace2), found in Schizosaccharomyces pombe (strain 972 / ATCC 24843) (Fission yeast).